The chain runs to 95 residues: Small ribosomal subunit protein uS19 (95 aa).

It belongs to the universal ribosomal protein uS19 family.

Functionally, protein S19 forms a complex with S13 that binds strongly to the 16S ribosomal RNA. This chain is Small ribosomal subunit protein uS19, found in Syntrophobacter fumaroxidans (strain DSM 10017 / MPOB).